The primary structure comprises 330 residues: 4-hydroxythreonine-4-phosphate dehydrogenase (330 aa).

Substrate-binding residues include histidine 135 and threonine 136. A divalent metal cation-binding residues include histidine 165, histidine 210, and histidine 266. Positions 274, 283, and 292 each coordinate substrate.

Belongs to the PdxA family. As to quaternary structure, homodimer. The cofactor is Zn(2+). Requires Mg(2+) as cofactor. Co(2+) is required as a cofactor.

The protein resides in the cytoplasm. It carries out the reaction 4-(phosphooxy)-L-threonine + NAD(+) = 3-amino-2-oxopropyl phosphate + CO2 + NADH. Its pathway is cofactor biosynthesis; pyridoxine 5'-phosphate biosynthesis; pyridoxine 5'-phosphate from D-erythrose 4-phosphate: step 4/5. Catalyzes the NAD(P)-dependent oxidation of 4-(phosphooxy)-L-threonine (HTP) into 2-amino-3-oxo-4-(phosphooxy)butyric acid which spontaneously decarboxylates to form 3-amino-2-oxopropyl phosphate (AHAP). The polypeptide is 4-hydroxythreonine-4-phosphate dehydrogenase (Vibrio cholerae serotype O1 (strain ATCC 39315 / El Tor Inaba N16961)).